The chain runs to 308 residues: Isoaspartyl peptidase/L-asparaginase (308 aa).

An N-acetylmethionine modification is found at Met1. Residue Thr168 is the Nucleophile of the active site. Residues 196 to 199 (RVGD) and 219 to 222 (TGHG) contribute to the substrate site.

The protein belongs to the Ntn-hydrolase family. As to quaternary structure, heterodimer of an alpha and beta chain produced by autocleavage. This heterodimer may then dimerize in turn, giving rise to a heterotetramer. Cleaved into an alpha and beta chain by autocatalysis; this activates the enzyme. The N-terminal residue of the beta subunit is responsible for the nucleophile hydrolase activity.

It localises to the cytoplasm. It carries out the reaction L-asparagine + H2O = L-aspartate + NH4(+). The enzyme catalyses Cleavage of a beta-linked Asp residue from the N-terminus of a polypeptide.. In terms of biological role, has both L-asparaginase and beta-aspartyl peptidase activity. May be involved in the production of L-aspartate, which can act as an excitatory neurotransmitter in some brain regions. Is highly active with L-Asp beta-methyl ester. Besides, has catalytic activity toward beta-aspartyl dipeptides and their methyl esters, including beta-L-Asp-L-Phe, beta-L-Asp-L-Phe methyl ester (aspartame), beta-L-Asp-L-Ala, beta-L-Asp-L-Leu and beta-L-Asp-L-Lys. Does not have aspartylglucosaminidase activity and is inactive toward GlcNAc-L-Asn. Likewise, has no activity toward glutamine. In Macaca fascicularis (Crab-eating macaque), this protein is Isoaspartyl peptidase/L-asparaginase (ASRGL1).